Here is a 461-residue protein sequence, read N- to C-terminus: Dihydrolipoyl dehydrogenase (461 aa).

FAD contacts are provided by residues 33–41 (EAAEVGGVC), lysine 50, and alanine 112. A disulfide bond links cysteine 41 and cysteine 46. NAD(+)-binding positions include 173–177 (GGGAV), glutamate 196, and 263–266 (AVGR). FAD-binding residues include aspartate 306 and alanine 314. Catalysis depends on histidine 437, which acts as the Proton acceptor.

The protein belongs to the class-I pyridine nucleotide-disulfide oxidoreductase family. Homodimer. FAD is required as a cofactor.

The protein localises to the membrane. The catalysed reaction is N(6)-[(R)-dihydrolipoyl]-L-lysyl-[protein] + NAD(+) = N(6)-[(R)-lipoyl]-L-lysyl-[protein] + NADH + H(+). In terms of biological role, has chromate reductase activity. The polypeptide is Dihydrolipoyl dehydrogenase (Thermus scotoductus (strain ATCC 700910 / SA-01)).